Reading from the N-terminus, the 173-residue chain is NADH-ubiquinone oxidoreductase chain 6 (173 aa).

5 consecutive transmembrane segments (helical) span residues 1–21 (MTYF…AVAS), 27–47 (YGVV…LSLG), 48–68 (ASFV…VVFV), 87–107 (VIGY…ISGF), and 139–159 (WGVG…FVVL).

It belongs to the complex I subunit 6 family.

The protein resides in the mitochondrion membrane. It catalyses the reaction a ubiquinone + NADH + 5 H(+)(in) = a ubiquinol + NAD(+) + 4 H(+)(out). Functionally, core subunit of the mitochondrial membrane respiratory chain NADH dehydrogenase (Complex I) that is believed to belong to the minimal assembly required for catalysis. Complex I functions in the transfer of electrons from NADH to the respiratory chain. The immediate electron acceptor for the enzyme is believed to be ubiquinone. The chain is NADH-ubiquinone oxidoreductase chain 6 (MT-ND6) from Brachyramphus marmoratus (Marbled murrelet).